Reading from the N-terminus, the 62-residue chain is Large ribosomal subunit protein bL32 (62 aa).

Positions 1-19 (MPNPKRRHSKARTGNRRAH) are enriched in basic residues. Residues 1–23 (MPNPKRRHSKARTGNRRAHDHLS) are disordered.

The protein belongs to the bacterial ribosomal protein bL32 family.

This is Large ribosomal subunit protein bL32 from Koribacter versatilis (strain Ellin345).